A 671-amino-acid polypeptide reads, in one-letter code: DNA ligase (671 aa).

NAD(+)-binding positions include 32–36 (DAEYD), 81–82 (SL), and E113. K115 functions as the N6-AMP-lysine intermediate in the catalytic mechanism. Residues R136, E173, K290, and K314 each contribute to the NAD(+) site. The Zn(2+) site is built by C408, C411, C426, and C432. Residues 593-671 (EIDSPFAGKT…EAEMIRLLGA (79 aa)) form the BRCT domain.

It belongs to the NAD-dependent DNA ligase family. LigA subfamily. Mg(2+) is required as a cofactor. The cofactor is Mn(2+).

It catalyses the reaction NAD(+) + (deoxyribonucleotide)n-3'-hydroxyl + 5'-phospho-(deoxyribonucleotide)m = (deoxyribonucleotide)n+m + AMP + beta-nicotinamide D-nucleotide.. Its function is as follows. DNA ligase that catalyzes the formation of phosphodiester linkages between 5'-phosphoryl and 3'-hydroxyl groups in double-stranded DNA using NAD as a coenzyme and as the energy source for the reaction. It is essential for DNA replication and repair of damaged DNA. In Salmonella gallinarum (strain 287/91 / NCTC 13346), this protein is DNA ligase.